We begin with the raw amino-acid sequence, 379 residues long: Lipid-A-disaccharide synthase (379 aa).

Belongs to the LpxB family.

The catalysed reaction is a lipid X + a UDP-2-N,3-O-bis[(3R)-3-hydroxyacyl]-alpha-D-glucosamine = a lipid A disaccharide + UDP + H(+). It functions in the pathway bacterial outer membrane biogenesis; LPS lipid A biosynthesis. In terms of biological role, condensation of UDP-2,3-diacylglucosamine and 2,3-diacylglucosamine-1-phosphate to form lipid A disaccharide, a precursor of lipid A, a phosphorylated glycolipid that anchors the lipopolysaccharide to the outer membrane of the cell. The protein is Lipid-A-disaccharide synthase of Idiomarina loihiensis (strain ATCC BAA-735 / DSM 15497 / L2-TR).